The following is a 519-amino-acid chain: MKEFKIYLELDGSQQHNFLYPLLFREYIYALAHDYGLNKSTISLETVGYDNKSSSLSVKRLITRTYQRLQRIHLSIYANDSNPNHFIGHNNNLYSQILSEGFAVIVEIPFSLRLVSFLEEKAKEKEMAKSHNFQSIHSIFPFFEDNFSHLNYVLDVLIPHPIRPEILVQTFRSWVKDASSLHLLRFFLHEYFNWDSLITPKESISIFLTSNPRFFLFLYNSHGYEYESIFFFLRNQSSHLRSTSSGLLLEQIYFYGKVEDLVEVFANDFQDILWLFKDPIMHYVRYQGKCILASKDTPLLMNKWKYYLVNLWQWHFRVWFQLGRVHINHLYKDYINFLGYLSIGRLNTLVVRSQMLENAFLIDNAMKKFETTLPIIPLIGSLTKARFCNPLGHPISKLTWADSSDSHIIDRFVRICRNLSHYHSGSSKKKSLYRIKYILRVSCFKSLVRKHKSTVRVFLKRLGLEFLEEFLTEEEHVLSVIFPRALFISRRLYKGRVWYLDILCINDLVNHDKFEILSN.

This sequence belongs to the intron maturase 2 family. MatK subfamily.

The protein localises to the plastid. The protein resides in the chloroplast. Usually encoded in the trnK tRNA gene intron. Probably assists in splicing its own and other chloroplast group II introns. The sequence is that of Maturase K from Aesculus pavia (Red buckeye).